Here is a 340-residue protein sequence, read N- to C-terminus: DNA-directed RNA polymerase subunit alpha (340 aa).

Positions 1 to 236 (MLSLSKNWNT…EQLQLFISFE (236 aa)) are alpha N-terminal domain (alpha-NTD). An alpha C-terminal domain (alpha-CTD) region spans residues 251–340 (FSPYLLKRVD…LSKRYEDSYN (90 aa)).

This sequence belongs to the RNA polymerase alpha chain family. Homodimer. The RNAP catalytic core consists of 2 alpha, 1 beta, 1 beta' and 1 omega subunit. When a sigma factor is associated with the core the holoenzyme is formed, which can initiate transcription.

It catalyses the reaction RNA(n) + a ribonucleoside 5'-triphosphate = RNA(n+1) + diphosphate. Its function is as follows. DNA-dependent RNA polymerase catalyzes the transcription of DNA into RNA using the four ribonucleoside triphosphates as substrates. This is DNA-directed RNA polymerase subunit alpha from Rickettsia rickettsii (strain Iowa).